The primary structure comprises 1580 residues: Endoribonuclease Dicer homolog 3 (1580 aa).

Residues 1-12 (MHSSLEPEKMEE) show a composition bias toward basic and acidic residues. The disordered stretch occupies residues 1 to 22 (MHSSLEPEKMEEGGGSNSLKRK). The region spanning 51–223 (VYEVAKNRNI…SPSNYAAQVS (173 aa)) is the Helicase ATP-binding domain. 64–71 (LGTGIDKS) is a binding site for ATP. The DECH box signature appears at 170-173 (DECH). A Helicase C-terminal domain is found at 394–562 (KLKELFHLLD…SCPPPVKNGH (169 aa)). A compositionally biased stretch (polar residues) spans 581–597 (EEAASTQTMSDPPSRNE). Disordered stretches follow at residues 581-601 (EEAA…QLPP) and 613-638 (QSNG…KKRK). The span at 622–633 (SSKSKSSSSAAG) shows a compositional bias: low complexity. The 125-residue stretch at 836–960 (NLIHFANASS…LPPELLARID (125 aa)) folds into the PAZ domain. RNase III domains are found at residues 985–1157 (ASQL…VSGG) and 1198–1340 (LIEL…IDTR). Glutamate 1234, aspartate 1326, and glutamate 1329 together coordinate Mg(2+).

Belongs to the helicase family. Dicer subfamily. Interacts with DRB2 and DRB5. Mg(2+) is required as a cofactor. Mn(2+) serves as cofactor.

It localises to the nucleus. The protein localises to the nucleolus. In terms of biological role, ribonuclease (RNase) III involved in RNA-mediated post-transcriptional gene silencing (PTGS). Involved in the processing of repeat-associated small interfering RNAs (ra-siRNAs, derived from heterochromatin and DNA repeats such as transposons) by cleaving small dsRNAs into 24 nucleotide ra-siRNAs. Plays a role in antiviral RNA silencing. Involved in the production of viral siRNAs derived from the cabbage leaf curl virus (CaLCuV) and tobacco rattle virus (TRV). Targeted by the viral silencing suppressor (VSR) protein 2b of the cucumber mosaic virus (CMV) that inactivates DCL3 function in RNA silencing. Acts redundantly with DICER-LIKE 1 (DCL1) to promote flowering via repression of FLOWERING LOCUS C (FLC). Does not seem to be involved in microRNAs (miRNAs) processing. This Arabidopsis thaliana (Mouse-ear cress) protein is Endoribonuclease Dicer homolog 3 (DCL3).